The following is a 125-amino-acid chain: S-adenosylmethionine decarboxylase proenzyme (125 aa).

Ser71 acts as the Schiff-base intermediate with substrate; via pyruvic acid in catalysis. Ser71 carries the post-translational modification Pyruvic acid (Ser); by autocatalysis. The Proton acceptor; for processing activity role is filled by His76. The Proton donor; for catalytic activity role is filled by Cys91.

Belongs to the prokaryotic AdoMetDC family. Type 1 subfamily. In terms of assembly, heterotetramer of two alpha and two beta chains arranged as a dimer of alpha/beta heterodimers. Pyruvate serves as cofactor. In terms of processing, is synthesized initially as an inactive proenzyme. Formation of the active enzyme involves a self-maturation process in which the active site pyruvoyl group is generated from an internal serine residue via an autocatalytic post-translational modification. Two non-identical subunits are generated from the proenzyme in this reaction, and the pyruvate is formed at the N-terminus of the alpha chain, which is derived from the carboxyl end of the proenzyme. The post-translation cleavage follows an unusual pathway, termed non-hydrolytic serinolysis, in which the side chain hydroxyl group of the serine supplies its oxygen atom to form the C-terminus of the beta chain, while the remainder of the serine residue undergoes an oxidative deamination to produce ammonia and the pyruvoyl group blocking the N-terminus of the alpha chain.

The enzyme catalyses S-adenosyl-L-methionine + H(+) = S-adenosyl 3-(methylsulfanyl)propylamine + CO2. The protein operates within amine and polyamine biosynthesis; S-adenosylmethioninamine biosynthesis; S-adenosylmethioninamine from S-adenosyl-L-methionine: step 1/1. Functionally, catalyzes the decarboxylation of S-adenosylmethionine to S-adenosylmethioninamine (dcAdoMet), the propylamine donor required for the synthesis of the polyamines spermine and spermidine from the diamine putrescine. In Pyrobaculum aerophilum (strain ATCC 51768 / DSM 7523 / JCM 9630 / CIP 104966 / NBRC 100827 / IM2), this protein is S-adenosylmethionine decarboxylase proenzyme.